Here is a 352-residue protein sequence, read N- to C-terminus: Fatty acid synthase (352 aa).

The region spanning 1–352 (MEDVVIAGIA…KVVLSLEHGL (352 aa)) is the Ketosynthase family 3 (KS3) domain. Active-site for beta-ketoacyl synthase activity residues include Cys161, His293, and His331.

As to quaternary structure, homodimer which monomers are arranged in a head to tail fashion.

The enzyme catalyses acetyl-CoA + n malonyl-CoA + 2n NADPH + 2n H(+) = a long-chain fatty acid + (n+1) CoA + n CO2 + 2n NADP(+).. Functionally, fatty acid synthetase catalyzes the formation of long-chain fatty acids from acetyl-CoA, malonyl-CoA and NADPH. This multifunctional protein has 7 catalytic activities as an acyl carrier protein. The protein is Fatty acid synthase (FASN) of Anser anser anser (Western greylag goose).